We begin with the raw amino-acid sequence, 116 residues long: Peptidyl-tRNA hydrolase (116 aa).

It belongs to the PTH2 family.

It is found in the cytoplasm. The enzyme catalyses an N-acyl-L-alpha-aminoacyl-tRNA + H2O = an N-acyl-L-amino acid + a tRNA + H(+). The natural substrate for this enzyme may be peptidyl-tRNAs which drop off the ribosome during protein synthesis. The sequence is that of Peptidyl-tRNA hydrolase from Methanopyrus kandleri (strain AV19 / DSM 6324 / JCM 9639 / NBRC 100938).